Reading from the N-terminus, the 675-residue chain is Regulator of G-protein signaling 9 (675 aa).

One can recognise a DEP domain in the interval 30 to 105 (PETGVRMHNQ…PDSSLYRFQT (76 aa)). The 62-residue stretch at 222-283 (VRKEIMYYQQ…DTQFWDLNAK (62 aa)) folds into the G protein gamma domain. The region spanning 299–414 (NFSELIRDPK…LKSPIYKEML (116 aa)) is the RGS domain. 2 disordered regions span residues 524-571 (RVAL…PPKA) and 637-662 (DSGTCLMDSDDPRAGESGDQTTEKEV). A compositionally biased stretch (polar residues) spans 542 to 551 (SGANSGPSVT). Basic and acidic residues-rich tracts occupy residues 552–562 (ENREPSADHSR) and 646–662 (DDPRAGESGDQTTEKEV).

As to quaternary structure, heterodimer with GNB5. Interacts with RGS7BP, leading to regulate the subcellular location of the heterodimer formed with GNB5. Component of the RGS9-1-Gbeta5 complex composed of RGS9 (RGS9-1), Gbeta5 (GNB5) and RGS9BP. Interacts with PDE6G and GNAT1. Retinal isoform 1 is light-dependent phosphorylated at 'Ser-475'. Phosphorylation is decreased by light exposition. Interaction with RGS9BP is decreased when isoform 1 is phosphorylated at 'Ser-475'. As to expression, isoform 1 is expressed in photoreceptor outer segments. Isoform 2 is expressed in brain striatum.

The protein resides in the membrane. Its function is as follows. Inhibits signal transduction by increasing the GTPase activity of G protein alpha subunits thereby driving them into their inactive GDP-bound form. Binds to GNAT1. Involved in phototransduction; key element in the recovery phase of visual transduction. The sequence is that of Regulator of G-protein signaling 9 (Rgs9) from Mus musculus (Mouse).